Reading from the N-terminus, the 279-residue chain is HTH-type transcriptional activator RhaS (279 aa).

Positions 175–273 (QALLGWLQNN…SQAPKSLRHQ (99 aa)) constitute an HTH araC/xylS-type domain. 2 consecutive DNA-binding regions (H-T-H motif) follow at residues 192-213 (GGLA…KQHT) and 240-263 (ITTI…RKAF).

In terms of assembly, binds DNA as a dimer.

Its subcellular location is the cytoplasm. Its function is as follows. Activates expression of the rhaBAD and rhaT operons. The chain is HTH-type transcriptional activator RhaS from Pectobacterium atrosepticum (strain SCRI 1043 / ATCC BAA-672) (Erwinia carotovora subsp. atroseptica).